Consider the following 334-residue polypeptide: Cell division protein ZipA (334 aa).

Residues 1–2 (ME) are Periplasmic-facing. A helical transmembrane segment spans residues 3–23 (LHIIFLILGGLLIVLLAGFSI). The Cytoplasmic portion of the chain corresponds to 24-334 (YSARREKSRI…DRQAYFARVS (311 aa)).

The protein belongs to the ZipA family. Interacts with FtsZ via their C-terminal domains.

The protein localises to the cell inner membrane. In terms of biological role, essential cell division protein that stabilizes the FtsZ protofilaments by cross-linking them and that serves as a cytoplasmic membrane anchor for the Z ring. Also required for the recruitment to the septal ring of downstream cell division proteins. This chain is Cell division protein ZipA, found in Haemophilus ducreyi (strain 35000HP / ATCC 700724).